Here is a 265-residue protein sequence, read N- to C-terminus: Orotidine 5'-phosphate decarboxylase (265 aa).

Residues Asp37, 59-61, 91-100, Tyr217, and Arg235 each bind substrate; these read KTH and DRKFADIGNT. The Proton donor role is filled by Lys93.

This sequence belongs to the OMP decarboxylase family.

The enzyme catalyses orotidine 5'-phosphate + H(+) = UMP + CO2. It functions in the pathway pyrimidine metabolism; UMP biosynthesis via de novo pathway; UMP from orotate: step 2/2. The chain is Orotidine 5'-phosphate decarboxylase (URA3) from Candida glabrata (strain ATCC 2001 / BCRC 20586 / JCM 3761 / NBRC 0622 / NRRL Y-65 / CBS 138) (Yeast).